Here is a 57-residue protein sequence, read N- to C-terminus: Large ribosomal subunit protein bL32 (57 aa).

Belongs to the bacterial ribosomal protein bL32 family.

The polypeptide is Large ribosomal subunit protein bL32 (Geobacillus sp. (strain WCH70)).